The following is a 149-amino-acid chain: UPF0756 membrane protein BBR47_12340 (149 aa).

Helical transmembrane passes span 6–26 (IILL…LVYA), 48–68 (PMFH…IAKG), 86–106 (IAIL…SILP), and 120–140 (LLAV…AGCI).

This sequence belongs to the UPF0756 family.

The protein resides in the cell membrane. The sequence is that of UPF0756 membrane protein BBR47_12340 from Brevibacillus brevis (strain 47 / JCM 6285 / NBRC 100599).